The sequence spans 292 residues: Enoyl-CoA hydratase domain-containing protein 2, mitochondrial (292 aa).

A mitochondrion-targeting transit peptide spans 1-35 (MLRVLCLLRPWRPLRARGCASDGAAGGSEIQVRAL). Position 97 is an N6-acetyllysine; alternate (lysine 97). At lysine 97 the chain carries N6-succinyllysine; alternate.

The protein belongs to the enoyl-CoA hydratase/isomerase family.

The protein localises to the mitochondrion. In Homo sapiens (Human), this protein is Enoyl-CoA hydratase domain-containing protein 2, mitochondrial (ECHDC2).